The following is a 297-amino-acid chain: tRNA pseudouridine synthase A (297 aa).

Residue aspartate 57 is the Nucleophile of the active site. Position 115 (tyrosine 115) interacts with substrate.

The protein belongs to the tRNA pseudouridine synthase TruA family. In terms of assembly, homodimer.

It catalyses the reaction uridine(38/39/40) in tRNA = pseudouridine(38/39/40) in tRNA. Formation of pseudouridine at positions 38, 39 and 40 in the anticodon stem and loop of transfer RNAs. This Nitratidesulfovibrio vulgaris (strain ATCC 29579 / DSM 644 / CCUG 34227 / NCIMB 8303 / VKM B-1760 / Hildenborough) (Desulfovibrio vulgaris) protein is tRNA pseudouridine synthase A.